Here is a 398-residue protein sequence, read N- to C-terminus: Lysophospholipid transporter LplT (398 aa).

A run of 11 helical transmembrane segments spans residues 17 to 37, 52 to 72, 90 to 110, 137 to 157, 163 to 183, 226 to 246, 256 to 276, 285 to 305, 309 to 329, 352 to 372, and 373 to 393; these read AVLV…FAIL, ILQI…GQIA, LGAF…LVGV, GLME…GGFL, AIAL…NFFI, LFWG…PVVL, ILNV…ARFI, MPAG…HSIW, VLLI…NALL, IAML…VPVV, and TTGI…WIWN.

The protein belongs to the major facilitator superfamily. LplT (TC 2.A.1.42) family.

The protein localises to the cell inner membrane. In terms of biological role, catalyzes the facilitated diffusion of 2-acyl-glycero-3-phosphoethanolamine (2-acyl-GPE) into the cell. This Photorhabdus laumondii subsp. laumondii (strain DSM 15139 / CIP 105565 / TT01) (Photorhabdus luminescens subsp. laumondii) protein is Lysophospholipid transporter LplT.